A 189-amino-acid polypeptide reads, in one-letter code: Protein GrpE (189 aa).

Residues 1-31 are disordered; that stretch reads MSKKHMKGNGGEVPENSEMSGSEELVAVEPG.

Belongs to the GrpE family. In terms of assembly, homodimer.

The protein resides in the cytoplasm. Its function is as follows. Participates actively in the response to hyperosmotic and heat shock by preventing the aggregation of stress-denatured proteins, in association with DnaK and GrpE. It is the nucleotide exchange factor for DnaK and may function as a thermosensor. Unfolded proteins bind initially to DnaJ; upon interaction with the DnaJ-bound protein, DnaK hydrolyzes its bound ATP, resulting in the formation of a stable complex. GrpE releases ADP from DnaK; ATP binding to DnaK triggers the release of the substrate protein, thus completing the reaction cycle. Several rounds of ATP-dependent interactions between DnaJ, DnaK and GrpE are required for fully efficient folding. In Syntrophobacter fumaroxidans (strain DSM 10017 / MPOB), this protein is Protein GrpE.